Consider the following 580-residue polypeptide: WD repeat-containing protein 46 (580 aa).

The disordered stretch occupies residues 34–108 (SWKEYKKMKQ…QQEKMKVTKD (75 aa)). Basic and acidic residues-rich tracts occupy residues 64 to 85 (TEGR…HDTG) and 98 to 108 (LQQEKMKVTKD). 6 WD repeats span residues 193–234 (AALD…YTYV), 235–272 (YDNL…NSFL), 274–312 (YVDV…HTNG), 315–354 (SLWS…GLDR), 357–396 (RIWD…NHVQ), and 399–436 (RGMH…IGHA).

In terms of assembly, part of the small subunit (SSU) processome.

Its subcellular location is the nucleus. It is found in the nucleolus. In terms of biological role, scaffold component of the nucleolar structure. Part of the small subunit (SSU) processome, first precursor of the small eukaryotic ribosomal subunit. Required for 18S rRNA processing. Plays a role in negative regulation of detoxification genes by inhibiting protein levels of transcription factor skn-1, leading to down-regulation of skn-1 target genes. The polypeptide is WD repeat-containing protein 46 (Caenorhabditis elegans).